The sequence spans 419 residues: Imidazolonepropionase (419 aa).

H87 and H89 together coordinate Fe(3+). 2 residues coordinate Zn(2+): H87 and H89. Residues R96, Y159, and H192 each contribute to the 4-imidazolone-5-propanoate site. Y159 serves as a coordination point for N-formimidoyl-L-glutamate. A Fe(3+)-binding site is contributed by H257. H257 lines the Zn(2+) pocket. Q260 serves as a coordination point for 4-imidazolone-5-propanoate. Residue D332 coordinates Fe(3+). D332 contributes to the Zn(2+) binding site. N-formimidoyl-L-glutamate is bound by residues N334 and G336. 4-imidazolone-5-propanoate is bound at residue S337.

Belongs to the metallo-dependent hydrolases superfamily. HutI family. Requires Zn(2+) as cofactor. Fe(3+) is required as a cofactor.

The protein localises to the cytoplasm. The catalysed reaction is 4-imidazolone-5-propanoate + H2O = N-formimidoyl-L-glutamate. Its pathway is amino-acid degradation; L-histidine degradation into L-glutamate; N-formimidoyl-L-glutamate from L-histidine: step 3/3. Catalyzes the hydrolytic cleavage of the carbon-nitrogen bond in imidazolone-5-propanoate to yield N-formimidoyl-L-glutamate. It is the third step in the universal histidine degradation pathway. The sequence is that of Imidazolonepropionase from Alteromonas mediterranea (strain DSM 17117 / CIP 110805 / LMG 28347 / Deep ecotype).